A 148-amino-acid chain; its full sequence is 3-dehydroquinate dehydratase (148 aa).

Tyr23 (proton acceptor) is an active-site residue. Positions 74, 80, and 87 each coordinate substrate. The active-site Proton donor is His100. Substrate contacts are provided by residues Ile101–Ser102 and Arg111.

This sequence belongs to the type-II 3-dehydroquinase family. Homododecamer.

It carries out the reaction 3-dehydroquinate = 3-dehydroshikimate + H2O. The protein operates within metabolic intermediate biosynthesis; chorismate biosynthesis; chorismate from D-erythrose 4-phosphate and phosphoenolpyruvate: step 3/7. Its function is as follows. Catalyzes a trans-dehydration via an enolate intermediate. This chain is 3-dehydroquinate dehydratase, found in Thermoanaerobacter pseudethanolicus (strain ATCC 33223 / 39E) (Clostridium thermohydrosulfuricum).